A 483-amino-acid polypeptide reads, in one-letter code: UDP-N-acetylmuramoyl-L-alanyl-D-glutamate--2,6-diaminopimelate ligase (483 aa).

Ser-30 contacts UDP-N-acetyl-alpha-D-muramoyl-L-alanyl-D-glutamate. ATP is bound at residue 109 to 115; sequence GTNGKTT. Residues 151 to 152, Ser-178, and Arg-186 contribute to the UDP-N-acetyl-alpha-D-muramoyl-L-alanyl-D-glutamate site; that span reads TT. Residue Lys-218 is modified to N6-carboxylysine. Residues Arg-380, 403–406, Gly-453, and Glu-457 contribute to the meso-2,6-diaminopimelate site; that span reads DNPR. Positions 403–406 match the Meso-diaminopimelate recognition motif motif; sequence DNPR.

The protein belongs to the MurCDEF family. MurE subfamily. Requires Mg(2+) as cofactor. In terms of processing, carboxylation is probably crucial for Mg(2+) binding and, consequently, for the gamma-phosphate positioning of ATP.

It localises to the cytoplasm. The catalysed reaction is UDP-N-acetyl-alpha-D-muramoyl-L-alanyl-D-glutamate + meso-2,6-diaminopimelate + ATP = UDP-N-acetyl-alpha-D-muramoyl-L-alanyl-gamma-D-glutamyl-meso-2,6-diaminopimelate + ADP + phosphate + H(+). The protein operates within cell wall biogenesis; peptidoglycan biosynthesis. Functionally, catalyzes the addition of meso-diaminopimelic acid to the nucleotide precursor UDP-N-acetylmuramoyl-L-alanyl-D-glutamate (UMAG) in the biosynthesis of bacterial cell-wall peptidoglycan. In Chlamydia abortus (strain DSM 27085 / S26/3) (Chlamydophila abortus), this protein is UDP-N-acetylmuramoyl-L-alanyl-D-glutamate--2,6-diaminopimelate ligase.